We begin with the raw amino-acid sequence, 458 residues long: Phosphoglucosamine mutase (458 aa).

The active-site Phosphoserine intermediate is Ser106. 4 residues coordinate Mg(2+): Ser106, Asp247, Asp249, and Asp251. Ser106 carries the phosphoserine modification.

This sequence belongs to the phosphohexose mutase family. Mg(2+) is required as a cofactor. Post-translationally, activated by phosphorylation.

It carries out the reaction alpha-D-glucosamine 1-phosphate = D-glucosamine 6-phosphate. Functionally, catalyzes the conversion of glucosamine-6-phosphate to glucosamine-1-phosphate. The sequence is that of Phosphoglucosamine mutase from Chlamydia felis (strain Fe/C-56) (Chlamydophila felis).